A 301-amino-acid chain; its full sequence is Acetyl-coenzyme A carboxylase carboxyl transferase subunit beta (301 aa).

The CoA carboxyltransferase N-terminal domain occupies 25-294 (LWIKCPETGE…SAANDVTRGA (270 aa)).

The protein belongs to the AccD/PCCB family. In terms of assembly, acetyl-CoA carboxylase is a heterohexamer composed of biotin carboxyl carrier protein (AccB), biotin carboxylase (AccC) and two subunits each of ACCase subunit alpha (AccA) and ACCase subunit beta (AccD).

Its subcellular location is the cytoplasm. The catalysed reaction is N(6)-carboxybiotinyl-L-lysyl-[protein] + acetyl-CoA = N(6)-biotinyl-L-lysyl-[protein] + malonyl-CoA. It functions in the pathway lipid metabolism; malonyl-CoA biosynthesis; malonyl-CoA from acetyl-CoA: step 1/1. In terms of biological role, component of the acetyl coenzyme A carboxylase (ACC) complex. Biotin carboxylase (BC) catalyzes the carboxylation of biotin on its carrier protein (BCCP) and then the CO(2) group is transferred by the transcarboxylase to acetyl-CoA to form malonyl-CoA. The polypeptide is Acetyl-coenzyme A carboxylase carboxyl transferase subunit beta (Rhizobium etli (strain ATCC 51251 / DSM 11541 / JCM 21823 / NBRC 15573 / CFN 42)).